We begin with the raw amino-acid sequence, 354 residues long: MTELKNDRYLRALLKQDVDKTPVWMMRQAGRYLPEYKKVRAQAGDFMSLCRNADLACEVTLQPLRRFDLDAAILFSDILTIPDAMGLGLYFAEGEGPKLKRPITCKKDVDNLIMPDPEGELQYVMNAVRTIRRELKGSVPLIGFAGSPWTLATYMVEGGSSKAFTKIKKMAFCEPQLLHTLLDKLADSVIDYLNAQIAAGAQSVMVFDTWGGVLSPRDYKDFSLQYMTKIVAGLQRSYEGQKIPVTLFTKNGGQWLEAIADTGCDAIGLDWTIDMASAKARVGDRVVLQGNMDPSMLYATPERIRQEVATILASFGKGNGHVFNLGHGIHLDVPPENGKVFVDAVHELSMPYHV.

Substrate contacts are provided by residues 27-31 (RQAGR), Asp77, Tyr154, Thr209, and His327.

It belongs to the uroporphyrinogen decarboxylase family. In terms of assembly, homodimer.

It is found in the cytoplasm. It catalyses the reaction uroporphyrinogen III + 4 H(+) = coproporphyrinogen III + 4 CO2. The protein operates within porphyrin-containing compound metabolism; protoporphyrin-IX biosynthesis; coproporphyrinogen-III from 5-aminolevulinate: step 4/4. Functionally, catalyzes the decarboxylation of four acetate groups of uroporphyrinogen-III to yield coproporphyrinogen-III. This is Uroporphyrinogen decarboxylase from Psychromonas ingrahamii (strain DSM 17664 / CCUG 51855 / 37).